Consider the following 89-residue polypeptide: Small ribosomal subunit protein uS15 (89 aa).

The protein belongs to the universal ribosomal protein uS15 family. As to quaternary structure, part of the 30S ribosomal subunit. Forms a bridge to the 50S subunit in the 70S ribosome, contacting the 23S rRNA.

In terms of biological role, one of the primary rRNA binding proteins, it binds directly to 16S rRNA where it helps nucleate assembly of the platform of the 30S subunit by binding and bridging several RNA helices of the 16S rRNA. Its function is as follows. Forms an intersubunit bridge (bridge B4) with the 23S rRNA of the 50S subunit in the ribosome. This chain is Small ribosomal subunit protein uS15, found in Parvibaculum lavamentivorans (strain DS-1 / DSM 13023 / NCIMB 13966).